Consider the following 341-residue polypeptide: Protein-glutamate methylesterase/protein-glutamine glutaminase 1 (341 aa).

The region spanning 2–119 (KVGIVNDSAL…SDAKLTAGPL (118 aa)) is the Response regulatory domain. At Asp53 the chain carries 4-aspartylphosphate. The region spanning 146-331 (TLAASRLVAI…LTAIAPRLVQ (186 aa)) is the CheB-type methylesterase domain. Catalysis depends on residues Ser158, His185, and Asp278.

The protein belongs to the CheB family. Post-translationally, phosphorylated by CheA. Phosphorylation of the N-terminal regulatory domain activates the methylesterase activity.

It is found in the cytoplasm. The catalysed reaction is [protein]-L-glutamate 5-O-methyl ester + H2O = L-glutamyl-[protein] + methanol + H(+). It catalyses the reaction L-glutaminyl-[protein] + H2O = L-glutamyl-[protein] + NH4(+). Functionally, involved in chemotaxis. Part of a chemotaxis signal transduction system that modulates chemotaxis in response to various stimuli. Catalyzes the demethylation of specific methylglutamate residues introduced into the chemoreceptors (methyl-accepting chemotaxis proteins or MCP) by CheR. Also mediates the irreversible deamidation of specific glutamine residues to glutamic acid. This is Protein-glutamate methylesterase/protein-glutamine glutaminase 1 from Cupriavidus pinatubonensis (strain JMP 134 / LMG 1197) (Cupriavidus necator (strain JMP 134)).